The primary structure comprises 362 residues: MQNSTLYPTVYVLGNGQLGRMLRYAGAPLDIYVEPLAFNAPVFDLPENAIITAEIERWEKTPLTELLGNHKNFVNQHIFGLLADRFTQKSLLDELNLSTSPWCLLKDKNQWNDLFQTVGEKVVVKRRTGGYDGRGQWIIRDENRADITDDLFGEVIAEKFIPFDYEVSIVGARFKNGEKRFYPVTHNLQQNGILRYSVVDCAFPQQSVQQKQAETMLGKIMDKLGYVGVMAMECFVVGDKLLINELAPRVHNSGHWTQLGCSISQFELHLRALLNLPTPELQTFAPSVMINLIGTNHNPKWLNIPFAQLHWYGKEVRIGRKVGHINLSHPNKAVIIQQLEKLCTELPEDYQSGLNWAIEKLK.

Residues R85, K125, 130–136, 158–161, E166, and 244–245 contribute to the ATP site; these read GYDGRGQ, EKFI, and NE. Residues 89-274 form the ATP-grasp domain; that stretch reads KSLLDELNLS…QFELHLRALL (186 aa).

It belongs to the PurK/PurT family. Homodimer.

It carries out the reaction 5-amino-1-(5-phospho-beta-D-ribosyl)imidazole + hydrogencarbonate + ATP = 5-carboxyamino-1-(5-phospho-D-ribosyl)imidazole + ADP + phosphate + 2 H(+). Its pathway is purine metabolism; IMP biosynthesis via de novo pathway; 5-amino-1-(5-phospho-D-ribosyl)imidazole-4-carboxylate from 5-amino-1-(5-phospho-D-ribosyl)imidazole (N5-CAIR route): step 1/2. In terms of biological role, catalyzes the ATP-dependent conversion of 5-aminoimidazole ribonucleotide (AIR) and HCO(3)(-) to N5-carboxyaminoimidazole ribonucleotide (N5-CAIR). This chain is N5-carboxyaminoimidazole ribonucleotide synthase, found in Haemophilus influenzae (strain ATCC 51907 / DSM 11121 / KW20 / Rd).